Here is a 1072-residue protein sequence, read N- to C-terminus: DNA-directed RNA polymerase subunit beta (1072 aa).

The protein belongs to the RNA polymerase beta chain family. As to quaternary structure, in plastids the minimal PEP RNA polymerase catalytic core is composed of four subunits: alpha, beta, beta', and beta''. When a (nuclear-encoded) sigma factor is associated with the core the holoenzyme is formed, which can initiate transcription.

The protein resides in the plastid. The protein localises to the chloroplast. It carries out the reaction RNA(n) + a ribonucleoside 5'-triphosphate = RNA(n+1) + diphosphate. Its function is as follows. DNA-dependent RNA polymerase catalyzes the transcription of DNA into RNA using the four ribonucleoside triphosphates as substrates. This Barbarea verna (Land cress) protein is DNA-directed RNA polymerase subunit beta.